The chain runs to 353 residues: Photosystem II protein D1 (353 aa).

An N-acetylthreonine modification is found at Thr2. At Thr2 the chain carries Phosphothreonine. The next 3 helical transmembrane spans lie at 29-46 (YIGW…TATS), 118-133 (HFLL…EWEL), and 142-156 (WIAV…AATA). His118 is a binding site for chlorophyll a. Position 126 (Tyr126) interacts with pheophytin a. [CaMn4O5] cluster contacts are provided by Asp170 and Glu189. A helical transmembrane segment spans residues 197–218 (FHMLGVAGVFGGSLFSAMHGSL). His198 is a chlorophyll a binding site. A quinone contacts are provided by residues His215 and 264–265 (SF). A Fe cation-binding site is contributed by His215. Residue His272 participates in Fe cation binding. The helical transmembrane segment at 274-288 (FLAAWPVVGIWFTAL) threads the bilayer. 4 residues coordinate [CaMn4O5] cluster: His332, Glu333, Asp342, and Ala344. The propeptide occupies 345-353 (AVEAPSING).

It belongs to the reaction center PufL/M/PsbA/D family. PSII is composed of 1 copy each of membrane proteins PsbA, PsbB, PsbC, PsbD, PsbE, PsbF, PsbH, PsbI, PsbJ, PsbK, PsbL, PsbM, PsbT, PsbX, PsbY, PsbZ, Psb30/Ycf12, at least 3 peripheral proteins of the oxygen-evolving complex and a large number of cofactors. It forms dimeric complexes. Requires The D1/D2 heterodimer binds P680, chlorophylls that are the primary electron donor of PSII, and subsequent electron acceptors. It shares a non-heme iron and each subunit binds pheophytin, quinone, additional chlorophylls, carotenoids and lipids. D1 provides most of the ligands for the Mn4-Ca-O5 cluster of the oxygen-evolving complex (OEC). There is also a Cl(-1) ion associated with D1 and D2, which is required for oxygen evolution. The PSII complex binds additional chlorophylls, carotenoids and specific lipids. as cofactor. Post-translationally, tyr-161 forms a radical intermediate that is referred to as redox-active TyrZ, YZ or Y-Z. In terms of processing, C-terminally processed by CTPA; processing is essential to allow assembly of the oxygen-evolving complex and thus photosynthetic growth.

It is found in the plastid. It localises to the chloroplast thylakoid membrane. The enzyme catalyses 2 a plastoquinone + 4 hnu + 2 H2O = 2 a plastoquinol + O2. In terms of biological role, this is one of the two reaction center proteins of photosystem II. Functionally, photosystem II (PSII) is a light-driven water:plastoquinone oxidoreductase that uses light energy to abstract electrons from H(2)O, generating O(2) and a proton gradient subsequently used for ATP formation. It consists of a core antenna complex that captures photons, and an electron transfer chain that converts photonic excitation into a charge separation. The D1/D2 (PsbA/PsbD) reaction center heterodimer binds P680, the primary electron donor of PSII as well as several subsequent electron acceptors. This Pisum sativum (Garden pea) protein is Photosystem II protein D1.